We begin with the raw amino-acid sequence, 324 residues long: Acetyl-coenzyme A carboxylase carboxyl transferase subunit alpha (324 aa).

A CoA carboxyltransferase C-terminal domain is found at 44–298 (RFQDKLTKLQ…RKELIKQLNI (255 aa)).

This sequence belongs to the AccA family. Acetyl-CoA carboxylase is a heterohexamer composed of biotin carboxyl carrier protein (accB), biotin carboxylase (accC) and two subunits each of ACCase subunit alpha (accA) and ACCase subunit beta (accD).

It localises to the plastid. Its subcellular location is the chloroplast. The catalysed reaction is N(6)-carboxybiotinyl-L-lysyl-[protein] + acetyl-CoA = N(6)-biotinyl-L-lysyl-[protein] + malonyl-CoA. Its pathway is lipid metabolism; malonyl-CoA biosynthesis; malonyl-CoA from acetyl-CoA: step 1/1. Functionally, component of the acetyl coenzyme A carboxylase (ACC) complex. First, biotin carboxylase catalyzes the carboxylation of biotin on its carrier protein (BCCP) and then the CO(2) group is transferred by the carboxyltransferase to acetyl-CoA to form malonyl-CoA. The protein is Acetyl-coenzyme A carboxylase carboxyl transferase subunit alpha of Porphyra purpurea (Red seaweed).